A 291-amino-acid chain; its full sequence is Pentonolactonase XacC (291 aa).

Residues Glu-15, Asn-141, and Asp-191 each contribute to the a divalent metal cation site. The active-site Proton donor/acceptor is Asp-191.

The protein belongs to the SMP-30/CGR1 family. In terms of assembly, monomer. A divalent metal cation is required as a cofactor.

The enzyme catalyses L-arabinono-1,4-lactone + H2O = L-arabinonate + H(+). It catalyses the reaction D-xylono-1,4-lactone + H2O = D-xylonate + H(+). It functions in the pathway carbohydrate degradation. Functionally, pentonolactonase involved in D-arabinose and D-xylose catabolism. Catalyzes the hydrolysis of both L-arabino-gamma-lactone and D-xylono-gamma-lactone to the corresponding acids. Can also hydrolyze D-galactono-gamma-lactone and D-glucono-delta-lactone. The polypeptide is Pentonolactonase XacC (Haloferax volcanii (strain ATCC 29605 / DSM 3757 / JCM 8879 / NBRC 14742 / NCIMB 2012 / VKM B-1768 / DS2) (Halobacterium volcanii)).